The following is a 1056-amino-acid chain: Carbamoyl phosphate synthase large chain (1056 aa).

A carboxyphosphate synthetic domain region spans residues methionine 1–glutamate 401. Arginine 129, arginine 169, glycine 175, glycine 176, lysine 208, isoleucine 210, glutamate 215, glycine 241, isoleucine 242, histidine 243, glutamine 284, and glutamate 298 together coordinate ATP. The region spanning lysine 133–valine 327 is the ATP-grasp 1 domain. Mg(2+) contacts are provided by glutamine 284, glutamate 298, and asparagine 300. Glutamine 284, glutamate 298, and asparagine 300 together coordinate Mn(2+). An oligomerization domain region spans residues isoleucine 402 to serine 546. A carbamoyl phosphate synthetic domain region spans residues glutamine 547–histidine 929. The ATP-grasp 2 domain occupies aspartate 671–leucine 861. Positions 707, 746, 748, 752, 777, 778, 779, 780, 820, and 832 each coordinate ATP. Residues glutamine 820, glutamate 832, and asparagine 834 each contribute to the Mg(2+) site. 3 residues coordinate Mn(2+): glutamine 820, glutamate 832, and asparagine 834. Residues isoleucine 930–lysine 1056 enclose the MGS-like domain. Residues isoleucine 930–lysine 1056 form an allosteric domain region.

The protein belongs to the CarB family. Composed of two chains; the small (or glutamine) chain promotes the hydrolysis of glutamine to ammonia, which is used by the large (or ammonia) chain to synthesize carbamoyl phosphate. Tetramer of heterodimers (alpha,beta)4. Mg(2+) is required as a cofactor. It depends on Mn(2+) as a cofactor.

The enzyme catalyses hydrogencarbonate + L-glutamine + 2 ATP + H2O = carbamoyl phosphate + L-glutamate + 2 ADP + phosphate + 2 H(+). It carries out the reaction hydrogencarbonate + NH4(+) + 2 ATP = carbamoyl phosphate + 2 ADP + phosphate + 2 H(+). Its pathway is amino-acid biosynthesis; L-arginine biosynthesis; carbamoyl phosphate from bicarbonate: step 1/1. The protein operates within pyrimidine metabolism; UMP biosynthesis via de novo pathway; (S)-dihydroorotate from bicarbonate: step 1/3. Its function is as follows. Large subunit of the glutamine-dependent carbamoyl phosphate synthetase (CPSase). CPSase catalyzes the formation of carbamoyl phosphate from the ammonia moiety of glutamine, carbonate, and phosphate donated by ATP, constituting the first step of 2 biosynthetic pathways, one leading to arginine and/or urea and the other to pyrimidine nucleotides. The large subunit (synthetase) binds the substrates ammonia (free or transferred from glutamine from the small subunit), hydrogencarbonate and ATP and carries out an ATP-coupled ligase reaction, activating hydrogencarbonate by forming carboxy phosphate which reacts with ammonia to form carbamoyl phosphate. This Limosilactobacillus reuteri (strain DSM 20016) (Lactobacillus reuteri) protein is Carbamoyl phosphate synthase large chain.